We begin with the raw amino-acid sequence, 373 residues long: Meiosis-specific kinetochore protein (373 aa).

Disordered stretches follow at residues 1–91 (MWPL…QDEK) and 250–276 (STPE…LTST). Residues 77–91 (SLQENRSSEDTQDEK) show a composition bias toward basic and acidic residues. Residues 275 to 277 (STP) carry the POLO box domain (PBD)-binding motif. Residues 332-335 (EICC) are required for localization to kinetochores.

In terms of assembly, interacts with CENPC. Interacts with PLK1; required for recruitment of PLK1 at kinetochores.

It localises to the chromosome. The protein localises to the centromere. Its subcellular location is the kinetochore. Key regulator of kinetochore function during meiosis I: required both for mono-orientation of kinetochores on sister chromosomes and protection of centromeric cohesin from separase-mediated cleavage. Acts by facilitating kinetochore mono-orientation during meiosis I, when kinetochores on sister chromosomes face the same direction and are thus captured and pulled by spindle fibers from the same pole. Also required to prevent cleavage of cohesin at centromeres during meiosis I, possibly by acting as a regulator of the shugoshin-dependent protection pathway. Acts in collaboration with PLK1: required for PLK1 enrichment to kinetochores. Not required during meiosis II or mitosis. This chain is Meiosis-specific kinetochore protein, found in Homo sapiens (Human).